We begin with the raw amino-acid sequence, 406 residues long: 4-hydroxy-3-methylbut-2-en-1-yl diphosphate synthase (ferredoxin) (406 aa).

The [4Fe-4S] cluster site is built by Cys315, Cys318, Cys349, and Glu356.

It belongs to the IspG family. [4Fe-4S] cluster serves as cofactor.

The enzyme catalyses (2E)-4-hydroxy-3-methylbut-2-enyl diphosphate + 2 oxidized [2Fe-2S]-[ferredoxin] + H2O = 2-C-methyl-D-erythritol 2,4-cyclic diphosphate + 2 reduced [2Fe-2S]-[ferredoxin] + H(+). It participates in isoprenoid biosynthesis; isopentenyl diphosphate biosynthesis via DXP pathway; isopentenyl diphosphate from 1-deoxy-D-xylulose 5-phosphate: step 5/6. Functionally, converts 2C-methyl-D-erythritol 2,4-cyclodiphosphate (ME-2,4cPP) into 1-hydroxy-2-methyl-2-(E)-butenyl 4-diphosphate. The chain is 4-hydroxy-3-methylbut-2-en-1-yl diphosphate synthase (ferredoxin) from Trichodesmium erythraeum (strain IMS101).